We begin with the raw amino-acid sequence, 347 residues long: UDP-3-O-acylglucosamine N-acyltransferase 1 (347 aa).

The active-site Proton acceptor is His-246.

This sequence belongs to the transferase hexapeptide repeat family. LpxD subfamily. Homotrimer.

The enzyme catalyses a UDP-3-O-[(3R)-3-hydroxyacyl]-alpha-D-glucosamine + a (3R)-hydroxyacyl-[ACP] = a UDP-2-N,3-O-bis[(3R)-3-hydroxyacyl]-alpha-D-glucosamine + holo-[ACP] + H(+). It functions in the pathway bacterial outer membrane biogenesis; LPS lipid A biosynthesis. Catalyzes the N-acylation of UDP-3-O-acylglucosamine using 3-hydroxyacyl-ACP as the acyl donor. Is involved in the biosynthesis of lipid A, a phosphorylated glycolipid that anchors the lipopolysaccharide to the outer membrane of the cell. In Francisella tularensis subsp. holarctica (strain LVS), this protein is UDP-3-O-acylglucosamine N-acyltransferase 1.